Here is a 167-residue protein sequence, read N- to C-terminus: Cyclic pyranopterin monophosphate synthase 2 (167 aa).

The segment at 1-23 (MARASGASDYRSGELSHQDERGA) is disordered. A compositionally biased stretch (basic and acidic residues) spans 11 to 23 (RSGELSHQDERGA). Residues 86–88 (LCH) and 122–123 (ME) each bind substrate. Asp-137 is an active-site residue.

Belongs to the MoaC family. In terms of assembly, homohexamer; trimer of dimers.

The catalysed reaction is (8S)-3',8-cyclo-7,8-dihydroguanosine 5'-triphosphate = cyclic pyranopterin phosphate + diphosphate. The protein operates within cofactor biosynthesis; molybdopterin biosynthesis. Its function is as follows. Catalyzes the conversion of (8S)-3',8-cyclo-7,8-dihydroguanosine 5'-triphosphate to cyclic pyranopterin monophosphate (cPMP). The polypeptide is Cyclic pyranopterin monophosphate synthase 2 (moaC2) (Mycobacterium bovis (strain ATCC BAA-935 / AF2122/97)).